The following is a 75-amino-acid chain: MKSDIHPKYTEVTVVCANCGNSFETRSTRPSIKVDVCSNCHPFYTGKQTLVDTAGRVDRFNKRFAKSTASQAQAK.

The protein belongs to the bacterial ribosomal protein bL31 family. Type A subfamily. As to quaternary structure, part of the 50S ribosomal subunit.

Functionally, binds the 23S rRNA. The sequence is that of Large ribosomal subunit protein bL31 from Chlorobium luteolum (strain DSM 273 / BCRC 81028 / 2530) (Pelodictyon luteolum).